The following is a 303-amino-acid chain: MSAKLIKGTEIREEILKEIEAEVKEIKEKHGKVPGLVTILVGESPASISYVTLKIQTAHRVGFKEVQDSQPVDISEADLLALIDKYNKDDSIHGILVQLPLPKHIDEKKVLNAIDPDKDVDGFHPVNVGRLMIGGSEVKFPPCTPAGIQEMIVRAGVETSGAEVVVVGRSNIVGKPIANMMLQKGPGANATVTVVHTRTKNMDEHCKRADILIVAAGVPGLVKPEWIKPGACVIDVGVNRVGEKPSAKDPNKMVAILSGDVDFDAAKEIAGSITPVPGGVGPMTITMLMLNTLKSLKFKLGLI.

Residues 168-170 (GRS), threonine 197, and valine 238 contribute to the NADP(+) site.

This sequence belongs to the tetrahydrofolate dehydrogenase/cyclohydrolase family. In terms of assembly, homodimer.

It carries out the reaction (6R)-5,10-methylene-5,6,7,8-tetrahydrofolate + NADP(+) = (6R)-5,10-methenyltetrahydrofolate + NADPH. It catalyses the reaction (6R)-5,10-methenyltetrahydrofolate + H2O = (6R)-10-formyltetrahydrofolate + H(+). The protein operates within one-carbon metabolism; tetrahydrofolate interconversion. Its function is as follows. Catalyzes the oxidation of 5,10-methylenetetrahydrofolate to 5,10-methenyltetrahydrofolate and then the hydrolysis of 5,10-methenyltetrahydrofolate to 10-formyltetrahydrofolate. The sequence is that of Bifunctional protein FolD from Desulfosudis oleivorans (strain DSM 6200 / JCM 39069 / Hxd3) (Desulfococcus oleovorans).